The sequence spans 420 residues: Glutamyl-tRNA reductase (420 aa).

Substrate-binding positions include 49-52, Ser107, 112-114, and Gln118; these read TCNR and EPQ. The active-site Nucleophile is Cys50. 187-192 contacts NADP(+); sequence GAGETI.

The protein belongs to the glutamyl-tRNA reductase family. Homodimer.

It carries out the reaction (S)-4-amino-5-oxopentanoate + tRNA(Glu) + NADP(+) = L-glutamyl-tRNA(Glu) + NADPH + H(+). Its pathway is porphyrin-containing compound metabolism; protoporphyrin-IX biosynthesis; 5-aminolevulinate from L-glutamyl-tRNA(Glu): step 1/2. Its function is as follows. Catalyzes the NADPH-dependent reduction of glutamyl-tRNA(Glu) to glutamate 1-semialdehyde (GSA). This is Glutamyl-tRNA reductase from Photobacterium profundum (strain SS9).